The primary structure comprises 291 residues: 33 kDa chaperonin (291 aa).

Cystine bridges form between cysteine 237–cysteine 239 and cysteine 270–cysteine 273.

It belongs to the HSP33 family. Under oxidizing conditions two disulfide bonds are formed involving the reactive cysteines. Under reducing conditions zinc is bound to the reactive cysteines and the protein is inactive.

The protein localises to the cytoplasm. Functionally, redox regulated molecular chaperone. Protects both thermally unfolding and oxidatively damaged proteins from irreversible aggregation. Plays an important role in the bacterial defense system toward oxidative stress. In Clostridioides difficile (strain 630) (Peptoclostridium difficile), this protein is 33 kDa chaperonin.